A 391-amino-acid chain; its full sequence is Pectate lyase D (391 aa).

The first 31 residues, Met1 to Ala31, serve as a signal peptide directing secretion. Residues Asp170 and Asp213 each contribute to the Ca(2+) site. Arg266 is a catalytic residue.

The protein belongs to the polysaccharide lyase 1 family. PLBC subfamily. It depends on Ca(2+) as a cofactor.

It localises to the secreted. It catalyses the reaction Eliminative cleavage of (1-&gt;4)-alpha-D-galacturonan to give oligosaccharides with 4-deoxy-alpha-D-galact-4-enuronosyl groups at their non-reducing ends.. It functions in the pathway glycan metabolism; pectin degradation; 2-dehydro-3-deoxy-D-gluconate from pectin: step 2/5. Functionally, involved in maceration and soft-rotting of plant tissue. The polypeptide is Pectate lyase D (pelD) (Dickeya chrysanthemi (Pectobacterium chrysanthemi)).